Consider the following 305-residue polypeptide: Putative beta-lactamase HcpD (305 aa).

An N-terminal signal peptide occupies residues 1–27 (MIKSWTKKWFLILFLMASCFGHLVATT). 4 TPR repeats span residues 28–61 (GEKY…RMGV), 96–133 (HLAC…KGGV), 168–205 (GISC…KDGA), and 240–277 (GSGC…GFSG). 7 disulfides stabilise this stretch: Cys-55/Cys-63, Cys-91/Cys-99, Cys-127/Cys-135, Cys-163/Cys-171, Cys-199/Cys-207, Cys-235/Cys-243, and Cys-271/Cys-279.

The protein belongs to the hcp beta-lactamase family.

It is found in the secreted. It carries out the reaction a beta-lactam + H2O = a substituted beta-amino acid. Functionally, may hydrolyze 6-aminopenicillinic acid and 7-aminocephalosporanic acid (ACA) derivatives. Binds to penicillin. In Helicobacter pylori (strain J99 / ATCC 700824) (Campylobacter pylori J99), this protein is Putative beta-lactamase HcpD (hcpD).